Here is a 152-residue protein sequence, read N- to C-terminus: Large ribosomal subunit protein bL9 (152 aa).

The protein belongs to the bacterial ribosomal protein bL9 family.

Functionally, binds to the 23S rRNA. The polypeptide is Large ribosomal subunit protein bL9 (Gloeothece citriformis (strain PCC 7424) (Cyanothece sp. (strain PCC 7424))).